Consider the following 471-residue polypeptide: Siroheme synthase 1 (471 aa).

Residues methionine 1 to leucine 203 are precorrin-2 dehydrogenase /sirohydrochlorin ferrochelatase. NAD(+)-binding positions include glutamate 22 to valine 23 and lysine 43 to lysine 44. Residue serine 128 is modified to Phosphoserine. Residues glycine 215–alanine 471 are uroporphyrinogen-III C-methyltransferase. Proline 224 serves as a coordination point for S-adenosyl-L-methionine. Catalysis depends on aspartate 247, which acts as the Proton acceptor. Residue lysine 269 is the Proton donor of the active site. S-adenosyl-L-methionine-binding positions include glycine 300–aspartate 302, isoleucine 305, threonine 330–alanine 331, methionine 382, and glycine 411.

It in the N-terminal section; belongs to the precorrin-2 dehydrogenase / sirohydrochlorin ferrochelatase family. The protein in the C-terminal section; belongs to the precorrin methyltransferase family.

It carries out the reaction uroporphyrinogen III + 2 S-adenosyl-L-methionine = precorrin-2 + 2 S-adenosyl-L-homocysteine + H(+). The enzyme catalyses precorrin-2 + NAD(+) = sirohydrochlorin + NADH + 2 H(+). It catalyses the reaction siroheme + 2 H(+) = sirohydrochlorin + Fe(2+). It functions in the pathway cofactor biosynthesis; adenosylcobalamin biosynthesis; precorrin-2 from uroporphyrinogen III: step 1/1. It participates in cofactor biosynthesis; adenosylcobalamin biosynthesis; sirohydrochlorin from precorrin-2: step 1/1. Its pathway is porphyrin-containing compound metabolism; siroheme biosynthesis; precorrin-2 from uroporphyrinogen III: step 1/1. The protein operates within porphyrin-containing compound metabolism; siroheme biosynthesis; siroheme from sirohydrochlorin: step 1/1. It functions in the pathway porphyrin-containing compound metabolism; siroheme biosynthesis; sirohydrochlorin from precorrin-2: step 1/1. Its function is as follows. Multifunctional enzyme that catalyzes the SAM-dependent methylations of uroporphyrinogen III at position C-2 and C-7 to form precorrin-2 via precorrin-1. Then it catalyzes the NAD-dependent ring dehydrogenation of precorrin-2 to yield sirohydrochlorin. Finally, it catalyzes the ferrochelation of sirohydrochlorin to yield siroheme. The protein is Siroheme synthase 1 of Cronobacter sakazakii (strain ATCC BAA-894) (Enterobacter sakazakii).